The sequence spans 306 residues: Curved DNA-binding protein (306 aa).

Residues 5-69 (DYYAIMGVKP…QRRAEYDQMW (65 aa)) form the J domain.

Its subcellular location is the cytoplasm. It is found in the nucleoid. Its function is as follows. DNA-binding protein that preferentially recognizes a curved DNA sequence. It is probably a functional analog of DnaJ; displays overlapping activities with DnaJ, but functions under different conditions, probably acting as a molecular chaperone in an adaptive response to environmental stresses other than heat shock. Lacks autonomous chaperone activity; binds native substrates and targets them for recognition by DnaK. Its activity is inhibited by the binding of CbpM. The chain is Curved DNA-binding protein from Escherichia coli O17:K52:H18 (strain UMN026 / ExPEC).